The chain runs to 334 residues: tRNA uridine(34) hydroxylase (334 aa).

Residues 123–217 (SDPDVILVDT…YLEEVKAEES (95 aa)) form the Rhodanese domain. The Cysteine persulfide intermediate role is filled by Cys177.

This sequence belongs to the TrhO family.

The enzyme catalyses uridine(34) in tRNA + AH2 + O2 = 5-hydroxyuridine(34) in tRNA + A + H2O. Catalyzes oxygen-dependent 5-hydroxyuridine (ho5U) modification at position 34 in tRNAs. This Shewanella baltica (strain OS195) protein is tRNA uridine(34) hydroxylase.